The following is a 166-amino-acid chain: Coiled-coil domain-containing protein 12 (166 aa).

Met-1 is subject to N-acetylmethionine. Positions 8-28 form a coiled coil; it reads VGRLEEEALRRKERLKALREK. Positions 21 to 53 are enriched in basic and acidic residues; the sequence is RLKALREKTGRKDREDGEPQTKQLREEGEEVGK. The segment at 21-55 is disordered; sequence RLKALREKTGRKDREDGEPQTKQLREEGEEVGKHR. Residue Lys-53 is modified to N6-acetyllysine. Residue Lys-94 forms a Glycyl lysine isopeptide (Lys-Gly) (interchain with G-Cter in SUMO2) linkage. Residues 115-144 are a coiled coil; that stretch reads DLKRDVAKKLEKLEKRTQRAIAELIRERLK. Positions 146 to 166 are disordered; it reads QEDSLASAVDATTGQEACDSD. Phosphoserine is present on residues Ser-149 and Ser-165.

The protein is Coiled-coil domain-containing protein 12 (Ccdc12) of Mus musculus (Mouse).